The sequence spans 127 residues: Large ribosomal subunit protein bL21 (127 aa).

Belongs to the bacterial ribosomal protein bL21 family. Part of the 50S ribosomal subunit. Contacts protein L20.

Functionally, this protein binds to 23S rRNA in the presence of protein L20. This Synechococcus sp. (strain ATCC 27144 / PCC 6301 / SAUG 1402/1) (Anacystis nidulans) protein is Large ribosomal subunit protein bL21.